Here is a 160-residue protein sequence, read N- to C-terminus: Small ribosomal subunit protein bS16 (160 aa).

Residues G115 to S139 form a disordered region. Positions P124–A134 are enriched in basic residues.

It belongs to the bacterial ribosomal protein bS16 family.

This chain is Small ribosomal subunit protein bS16, found in Mycobacterium leprae (strain Br4923).